The primary structure comprises 139 residues: ATP synthase epsilon chain (139 aa).

It belongs to the ATPase epsilon chain family. As to quaternary structure, F-type ATPases have 2 components, CF(1) - the catalytic core - and CF(0) - the membrane proton channel. CF(1) has five subunits: alpha(3), beta(3), gamma(1), delta(1), epsilon(1). CF(0) has three main subunits: a, b and c.

The protein localises to the cell inner membrane. Functionally, produces ATP from ADP in the presence of a proton gradient across the membrane. The sequence is that of ATP synthase epsilon chain from Enterobacter sp. (strain 638).